Here is a 248-residue protein sequence, read N- to C-terminus: Large ribosomal subunit protein uL4 (248 aa).

Positions 44–109 (QDTGTDEYAG…LDINTKERKL (66 aa)) are disordered. Residues 92-109 (PKAEKDRGLDINTKERKL) show a composition bias toward basic and acidic residues.

Belongs to the universal ribosomal protein uL4 family. Part of the 50S ribosomal subunit.

One of the primary rRNA binding proteins, this protein initially binds near the 5'-end of the 23S rRNA. It is important during the early stages of 50S assembly. It makes multiple contacts with different domains of the 23S rRNA in the assembled 50S subunit and ribosome. In terms of biological role, forms part of the polypeptide exit tunnel. In Natronomonas pharaonis (strain ATCC 35678 / DSM 2160 / CIP 103997 / JCM 8858 / NBRC 14720 / NCIMB 2260 / Gabara) (Halobacterium pharaonis), this protein is Large ribosomal subunit protein uL4.